Consider the following 217-residue polypeptide: Adenylate kinase (217 aa).

10–15 (GAGKGT) serves as a coordination point for ATP. An NMP region spans residues 30 to 59 (STGDMFRAAMKNETELGLKAKSFIDAGDLV). AMP is bound by residues Thr-31, Arg-36, 57 to 59 (DLV), 85 to 88 (GFPR), and Gln-92. Residues 126 to 163 (GRRVSPTTGKTYHIVYNPPKVEGKCDIDGSDLIQRDDD) are LID. ATP contacts are provided by residues Arg-127 and 136-137 (TY). AMP contacts are provided by Arg-160 and Arg-171. Position 199 (Gln-199) interacts with ATP.

It belongs to the adenylate kinase family. In terms of assembly, monomer.

It localises to the cytoplasm. It catalyses the reaction AMP + ATP = 2 ADP. Its pathway is purine metabolism; AMP biosynthesis via salvage pathway; AMP from ADP: step 1/1. Functionally, catalyzes the reversible transfer of the terminal phosphate group between ATP and AMP. Plays an important role in cellular energy homeostasis and in adenine nucleotide metabolism. This Shouchella clausii (strain KSM-K16) (Alkalihalobacillus clausii) protein is Adenylate kinase.